We begin with the raw amino-acid sequence, 106 residues long: Urease subunit beta (106 aa).

It belongs to the urease beta subunit family. In terms of assembly, heterotrimer of UreA (gamma), UreB (beta) and UreC (alpha) subunits. Three heterotrimers associate to form the active enzyme.

It localises to the cytoplasm. It carries out the reaction urea + 2 H2O + H(+) = hydrogencarbonate + 2 NH4(+). It participates in nitrogen metabolism; urea degradation; CO(2) and NH(3) from urea (urease route): step 1/1. The polypeptide is Urease subunit beta (Prochlorococcus marinus (strain MIT 9301)).